The following is a 236-amino-acid chain: Phosphoribosylaminoimidazole-succinocarboxamide synthase (236 aa).

Belongs to the SAICAR synthetase family.

It carries out the reaction 5-amino-1-(5-phospho-D-ribosyl)imidazole-4-carboxylate + L-aspartate + ATP = (2S)-2-[5-amino-1-(5-phospho-beta-D-ribosyl)imidazole-4-carboxamido]succinate + ADP + phosphate + 2 H(+). It participates in purine metabolism; IMP biosynthesis via de novo pathway; 5-amino-1-(5-phospho-D-ribosyl)imidazole-4-carboxamide from 5-amino-1-(5-phospho-D-ribosyl)imidazole-4-carboxylate: step 1/2. This chain is Phosphoribosylaminoimidazole-succinocarboxamide synthase, found in Pseudomonas entomophila (strain L48).